The chain runs to 104 residues: Large ribosomal subunit protein uL24 (104 aa).

Belongs to the universal ribosomal protein uL24 family. In terms of assembly, part of the 50S ribosomal subunit.

Its function is as follows. One of two assembly initiator proteins, it binds directly to the 5'-end of the 23S rRNA, where it nucleates assembly of the 50S subunit. In terms of biological role, one of the proteins that surrounds the polypeptide exit tunnel on the outside of the subunit. This Erwinia tasmaniensis (strain DSM 17950 / CFBP 7177 / CIP 109463 / NCPPB 4357 / Et1/99) protein is Large ribosomal subunit protein uL24.